Reading from the N-terminus, the 137-residue chain is uncharacterized protein (137 aa).

Residues 5-136 (NRHLIHQINQ…FSHLFRMFLQ (132 aa)) enclose the HTH marR-type domain. A DNA-binding region (H-T-H motif) is located at residues 51 to 74 (QKEIWSYLNVEAPTVTRTIKRLEE).

This is an uncharacterized protein from Bacillus subtilis (strain 168).